Here is a 498-residue protein sequence, read N- to C-terminus: Delta(14)-sterol reductase erg24A (498 aa).

The next 4 helical transmembrane spans lie at 30-50, 91-111, 136-156, and 163-183; these read LGAF…TFLC, VTVW…FLPG, ILIL…FVVW, and YVQI…FVYA. Asn-257 carries an N-linked (GlcNAc...) asparagine glycan. 3 consecutive transmembrane segments (helical) span residues 275 to 295, 302 to 322, and 339 to 359; these read IVLS…MEPA, VIMD…VPFI, and LREI…FRGA. Residues Lys-363, Arg-367, Trp-395, and 402-403 contribute to the NADP(+) site; that span reads NY. Residue Asn-429 is glycosylated (N-linked (GlcNAc...) asparagine). Residues 444 to 464 traverse the membrane as a helical segment; sequence VRGWGMIFTYFFLVYFGALLI. Residues Asp-470, 474-478, and Tyr-485 contribute to the NADP(+) site; that span reads CKSKY.

Belongs to the ERG4/ERG24 family.

It is found in the endoplasmic reticulum membrane. The protein operates within steroid metabolism; ergosterol biosynthesis. Its function is as follows. Delta(14)-sterol reductase; part of the third module of ergosterol biosynthesis pathway that includes the late steps of the pathway. Catalyzes the reduction of the C14=C15 double bond within 4,4,24-trimethyl ergosta-8,14,24(28)-trienolto produce 4,4-dimethylfecosterol. The third module or late pathway involves the ergosterol synthesis itself through consecutive reactions that mainly occur in the endoplasmic reticulum (ER) membrane. Firstly, the squalene synthase erg9 catalyzes the condensation of 2 farnesyl pyrophosphate moieties to form squalene, which is the precursor of all steroids. Squalene synthase is crucial for balancing the incorporation of farnesyl diphosphate (FPP) into sterol and nonsterol isoprene synthesis. Secondly, squalene is converted into lanosterol by the consecutive action of the squalene epoxidase erg1 and the lanosterol synthase erg7. Then, the delta(24)-sterol C-methyltransferase erg6 methylates lanosterol at C-24 to produce eburicol. Eburicol is the substrate of the sterol 14-alpha demethylase encoded by cyp51A and cyp51B, to yield 4,4,24-trimethyl ergosta-8,14,24(28)-trienol. The C-14 reductase erg24 then reduces the C14=C15 double bond which leads to 4,4-dimethylfecosterol. A sequence of further demethylations at C-4, involving the C-4 demethylation complex containing the C-4 methylsterol oxidases erg25A or erg25B, the sterol-4-alpha-carboxylate 3-dehydrogenase erg26 and the 3-keto-steroid reductase erg27, leads to the production of fecosterol via 4-methylfecosterol. The C-8 sterol isomerase erg2 then catalyzes the reaction which results in unsaturation at C-7 in the B ring of sterols and thus converts fecosterol to episterol. The sterol-C5-desaturase erg3B then catalyzes the introduction of a C-5 double bond in the B ring to produce 5-dehydroepisterol. The 2 other sterol-C5-desaturases, erg3A and erg3C, seem to be less important in ergosterol biosynthesis. The C-22 sterol desaturase erg5 further converts 5-dehydroepisterol into ergosta-5,7,22,24(28)-tetraen-3beta-ol by forming the C-22(23) double bond in the sterol side chain. Finally, ergosta-5,7,22,24(28)-tetraen-3beta-ol is substrate of the C-24(28) sterol reductases erg4A and erg4B to produce ergosterol. Possible alternative sterol biosynthetic pathways might exist from fecosterol to ergosterol, depending on the activities of the erg3 isoforms. This chain is Delta(14)-sterol reductase erg24A, found in Aspergillus fumigatus (strain ATCC MYA-4609 / CBS 101355 / FGSC A1100 / Af293) (Neosartorya fumigata).